We begin with the raw amino-acid sequence, 123 residues long: Small ribosomal subunit protein uS12 (123 aa).

Asp-89 is subject to 3-methylthioaspartic acid.

Belongs to the universal ribosomal protein uS12 family. Part of the 30S ribosomal subunit. Contacts proteins S8 and S17. May interact with IF1 in the 30S initiation complex.

With S4 and S5 plays an important role in translational accuracy. In terms of biological role, interacts with and stabilizes bases of the 16S rRNA that are involved in tRNA selection in the A site and with the mRNA backbone. Located at the interface of the 30S and 50S subunits, it traverses the body of the 30S subunit contacting proteins on the other side and probably holding the rRNA structure together. The combined cluster of proteins S8, S12 and S17 appears to hold together the shoulder and platform of the 30S subunit. This is Small ribosomal subunit protein uS12 from Bifidobacterium animalis subsp. lactis (strain AD011).